Here is a 247-residue protein sequence, read N- to C-terminus: Adenosylcobinamide-GDP ribazoletransferase (247 aa).

5 consecutive transmembrane segments (helical) span residues 34 to 54 (IITFPLIGLLLGAISGLVFMV), 59 to 79 (CGVPLAALFSVLVLALMTGGF), 113 to 133 (GGLALIFVVLAKILVLSELAL), 138 to 158 (ILASLAAACAVSRGTAALLMY), and 194 to 214 (VLLPGMHGVAAMVVTMVAIFI).

This sequence belongs to the CobS family. Requires Mg(2+) as cofactor.

The protein resides in the cell inner membrane. It catalyses the reaction alpha-ribazole + adenosylcob(III)inamide-GDP = adenosylcob(III)alamin + GMP + H(+). The enzyme catalyses alpha-ribazole 5'-phosphate + adenosylcob(III)inamide-GDP = adenosylcob(III)alamin 5'-phosphate + GMP + H(+). It participates in cofactor biosynthesis; adenosylcobalamin biosynthesis; adenosylcobalamin from cob(II)yrinate a,c-diamide: step 7/7. Its function is as follows. Joins adenosylcobinamide-GDP and alpha-ribazole to generate adenosylcobalamin (Ado-cobalamin). Also synthesizes adenosylcobalamin 5'-phosphate from adenosylcobinamide-GDP and alpha-ribazole 5'-phosphate. The chain is Adenosylcobinamide-GDP ribazoletransferase from Escherichia coli (strain 55989 / EAEC).